The primary structure comprises 434 residues: Serine/threonine-protein kinase Sgk1-B (434 aa).

The tract at residues 68–94 is disordered; that stretch reads ESELLNENSSPPPSHSQQINLGPSSNP. Residues 101 to 358 enclose the Protein kinase domain; the sequence is FQFLKIIGKG…FMEIKNHIFF (258 aa). ATP is bound by residues 107-115 and lysine 130; that span reads IGKGSFGKV. The active-site Proton acceptor is aspartate 225. An AGC-kinase C-terminal domain is found at 359–434; sequence SPIDWDDLIN…SYAPPMDSYL (76 aa).

This sequence belongs to the protein kinase superfamily. AGC Ser/Thr protein kinase family.

Its subcellular location is the cytoplasm. The protein localises to the nucleus. It is found in the endoplasmic reticulum. It catalyses the reaction L-seryl-[protein] + ATP = O-phospho-L-seryl-[protein] + ADP + H(+). The enzyme catalyses L-threonyl-[protein] + ATP = O-phospho-L-threonyl-[protein] + ADP + H(+). Protein kinase that may play an important role in cellular stress response. Plays an important role in activating certain potassium, sodium, and chloride channels, suggesting an involvement in the regulation of processes such as cell survival, neuronal excitability and renal sodium excretion. This Xenopus laevis (African clawed frog) protein is Serine/threonine-protein kinase Sgk1-B (sgk1-b).